Consider the following 191-residue polypeptide: Ribosomal RNA small subunit methyltransferase G (191 aa).

S-adenosyl-L-methionine contacts are provided by residues glycine 62, leucine 67, 111 to 112, and arginine 124; that span reads IE.

It belongs to the methyltransferase superfamily. RNA methyltransferase RsmG family.

It is found in the cytoplasm. It catalyses the reaction guanosine(527) in 16S rRNA + S-adenosyl-L-methionine = N(7)-methylguanosine(527) in 16S rRNA + S-adenosyl-L-homocysteine. In terms of biological role, specifically methylates the N7 position of guanine in position 527 of 16S rRNA. The polypeptide is Ribosomal RNA small subunit methyltransferase G (Rickettsia rickettsii (strain Sheila Smith)).